The sequence spans 37 residues: Large ribosomal subunit protein bL36 (37 aa).

It belongs to the bacterial ribosomal protein bL36 family.

This chain is Large ribosomal subunit protein bL36, found in Colwellia psychrerythraea (strain 34H / ATCC BAA-681) (Vibrio psychroerythus).